A 277-amino-acid chain; its full sequence is Sulfur carrier protein FdhD (277 aa).

Cys121 acts as the Cysteine persulfide intermediate in catalysis. 260–265 (FCKPGR) is a binding site for Mo-bis(molybdopterin guanine dinucleotide).

It belongs to the FdhD family.

It localises to the cytoplasm. In terms of biological role, required for formate dehydrogenase (FDH) activity. Acts as a sulfur carrier protein that transfers sulfur from IscS to the molybdenum cofactor prior to its insertion into FDH. The polypeptide is Sulfur carrier protein FdhD (Shigella dysenteriae serotype 1 (strain Sd197)).